The following is a 1222-amino-acid chain: PAN2-PAN3 deadenylation complex catalytic subunit PAN2 (1222 aa).

WD repeat units lie at residues 104 to 143 and 276 to 315; these read PEMT…IVDQ and ANVA…HFNE. The linker stretch occupies residues 316-451; it reads IGKETEFSDI…GLKINGETKE (136 aa). The USP domain occupies 452–821; sequence DPLLKYSNVE…SPCTLAYQIS (370 aa). The region spanning 871-1027 is the Exonuclease domain; that stretch reads ALDTEFVDLE…WAVFKEYIQE (157 aa). Positions 873, 875, and 982 each coordinate a divalent metal cation. The interval 1035–1067 is disordered; sequence TSITTTTNPNIHDANTSTTTTTAITTTPPEGHD. The span at 1050-1061 shows a compositional bias: low complexity; the sequence is TSTTTTTAITTT. Residue Asp1071 coordinates a divalent metal cation. Disordered stretches follow at residues 1110–1152 and 1167–1222; these read PARY…LSGR and ASVT…SPMR. Residues 1119–1133 are compositionally biased toward low complexity; that stretch reads PNPNNNNINNGVNPN. The segment covering 1134–1144 has biased composition (polar residues); the sequence is GLSTPGSTNPI. The segment covering 1180-1191 has biased composition (low complexity); that stretch reads NGSMSGSTPSTP. Residues 1207-1216 show a composition bias toward gly residues; that stretch reads SFGGAKGLTF.

Belongs to the peptidase C19 family. PAN2 subfamily. As to quaternary structure, forms a heterotrimer with an asymmetric homodimer of the regulatory subunit PAN3 to form the poly(A)-nuclease (PAN) deadenylation complex. The cofactor is a divalent metal cation.

The protein localises to the cytoplasm. It catalyses the reaction Exonucleolytic cleavage of poly(A) to 5'-AMP.. Positively regulated by the regulatory subunit PAN3. In terms of biological role, catalytic subunit of the poly(A)-nuclease (PAN) deadenylation complex, one of two cytoplasmic mRNA deadenylases involved in mRNA turnover. PAN specifically shortens poly(A) tails of RNA and the activity is stimulated by poly(A)-binding protein PAB1. PAN deadenylation is followed by rapid degradation of the shortened mRNA tails by the CCR4-NOT complex. Deadenylated mRNAs are then degraded by two alternative mechanisms, namely exosome-mediated 3'-5' exonucleolytic degradation, or deadenylation-dependent mRNA decaping and subsequent 5'-3' exonucleolytic degradation by XRN1. May also be involved in post-transcriptional maturation of mRNA poly(A) tails. The protein is PAN2-PAN3 deadenylation complex catalytic subunit PAN2 of Coccidioides immitis (strain RS) (Valley fever fungus).